Consider the following 157-residue polypeptide: Ciliary microtubule inner protein 5 (157 aa).

Disordered stretches follow at residues 1–57 (MGSR…SALG) and 92–124 (DPMG…AVGS). The span at 92–109 (DPMGNKKEPVKLPDHVPR) shows a compositional bias: basic and acidic residues.

The protein resides in the cell projection. It localises to the cilium. The polypeptide is Ciliary microtubule inner protein 5 (CIMIP5) (Bos taurus (Bovine)).